We begin with the raw amino-acid sequence, 405 residues long: MVLAAPLLLGFLLLALELRPRGEAAEGPAAAAAAAAAAAGVGGERSSRPAPSAPPEPDGCPVCVWRQHSRELRLESIKSQILSKLRLKEAPNISREVVKQLLPKAPPLQQILDLHDFQGDALQPEDFLEEDEYHATTETVISMAQETDPAVQTDGSPLCCHFHFSPKVMFTKVLKAQLWVYLRPVPRPATVYLQILRLKPLTGEGTAGGGGGGRRHIRIRSLKIELHSRSGHWQSIDFKQVLHSWFRQPQSNWGIEINAFDPSGTDLAVTSLGPGAEGLHPFMELRVLENTKRSRRNLGLDCDEHSSESRCCRYPLTVDFEAFGWDWIIAPKRYKANYCSGQCEYMFMQKYPHTHLVQQANPRGSAGPCCTPTKMSPINMLYFNDKQQIIYGKIPGMVVDRCGCS.

A signal peptide spans 1-20; it reads MVLAAPLLLGFLLLALELRP. The propeptide occupies 21–296; it reads RGEAAEGPAA…VLENTKRSRR (276 aa). The N-linked (GlcNAc...) asparagine glycan is linked to asparagine 92. Intrachain disulfides connect cysteine 302-cysteine 312, cysteine 311-cysteine 370, cysteine 339-cysteine 402, and cysteine 343-cysteine 404.

The protein belongs to the TGF-beta family. Homodimer; disulfide-linked. Interacts directly with ACVR2B. Interacts directly with ACVR2A. Interacts with ACVR1B, TGFBR1 and ACVR1C in an ACVR2B-dependent manner. Interacts with FST isoform 2/FS288. Post-translationally, synthesized as large precursor molecule that undergoes proteolytic cleavage by furin-like proteases. This produces an inactive form consisting of the mature C-terminal portion non-covalently bound to its cleaved N-terminal propeptide. Activation of the mature form requires additional cleavage of the propeptide by a tolloid-like metalloproteinase. In terms of tissue distribution, highly expressed in the developing limb bud, initially detected in the distal mesenchyme, and later localizing to regions around the developing bones. Is also expressed in adult dental pulp and brain.

The protein resides in the secreted. In terms of biological role, secreted signal that acts globally to regulate anterior/posterior axial patterning during development. May play critical roles in patterning both mesodermal and neural tissues. It is required for proper vertebral patterning and orofacial development. Signals through activin receptors type-2, ACVR2A and ACVR2B, and activin receptors type-1, ACVR1B, ACVR1C and TGFBR1 leading to the phosphorylation of SMAD2 and SMAD3. This chain is Growth/differentiation factor 11 (Gdf11), found in Mus musculus (Mouse).